We begin with the raw amino-acid sequence, 1129 residues long: Egg-laying defective protein 27 (1129 aa).

Residues 1–11 (MSRFDSQCSSE) are compositionally biased toward polar residues. The segment at 1–43 (MSRFDSQCSSEDVNKEDECVPSSSEDSQDGVSSPMENDDEPEF) is disordered. Residues 22-33 (SSSEDSQDGVSS) are compositionally biased toward low complexity. Positions 87–223 (TLYRLRDSVF…QDSTKLASTH (137 aa)) constitute a BAH domain. The ELM2 domain maps to 224-327 (YAIRVGTSFQ…DALSELNAND (104 aa)). Residues 332-384 (TDVDNMTQDDAKKFAKGIKQLGKNFSRIHRELLPHHSREQLVSYYYLWKKTPE) form the SANT domain. Positions 388-434 (PKQAARRVNPTSIKRPTKEKVKASRPTSTEYLDFDSASESDVENNGP) are disordered. The segment covering 419–429 (LDFDSASESDV) has biased composition (acidic residues). A GATA-type; atypical zinc finger spans residues 439 to 485 (CHHCYGAESKDWHHANGLLLCTDCRLHYKKYGQLRQIANRPSQVPAC). Disordered stretches follow at residues 488–636 (KRSN…DPMP), 693–717 (RDETNGETNSDLKDDENVEPDSPED), 790–814 (QQNQIKKEQQQSQPTPQQIHQQQAQ), 899–950 (MIAE…HAAA), and 982–1040 (MAAQ…REHA). Composition is skewed to polar residues over residues 525 to 545 (PSTVSNGAPNLTAEETPTKKL) and 561 to 573 (VINNVEKSNSSEE). 2 stretches are compositionally biased toward acidic residues: residues 613 to 634 (SYDDDDDEEEGKMTIDEGDDDP) and 705 to 717 (KDDENVEPDSPED). Over residues 899-914 (MIAEQQQQQRHAAAQQ) the composition is skewed to low complexity. Over residues 915-932 (LREREQREQRERERERQH) the composition is skewed to basic and acidic residues. 2 stretches are compositionally biased toward low complexity: residues 933–950 (QQQAQQALHQQQQQHAAA) and 983–999 (AAQQQQQQQQAAQAQAQ). Over residues 1000–1040 (RDQERERREREAREREAAREREREQAAREAAARDQAAREHA) the composition is skewed to basic and acidic residues.

In terms of assembly, interacts with ceh-6, sem-4 and sox-2. Interacts with wdr-5.1. Expression detected in anterior intestine and head region.

Its subcellular location is the nucleus. Functionally, transcription factor which promotes stress survival and delays aging. Required for cell cycle progression and development of the mesodermal and endodermal embryonic lineages. Required for normal T-cell polarity, for correct migration of QL neuroblast descendants and other cells, for embryonic patterning and for the embryonic expression of hlh-8. Also required for the transdifferentiation of the Y rectal epithelial cell to the PDA motor neuron during larval development. The protein is Egg-laying defective protein 27 of Caenorhabditis elegans.